The sequence spans 291 residues: MEMO1 family protein PYRAB05390 (291 aa).

The protein belongs to the MEMO1 family.

The sequence is that of MEMO1 family protein PYRAB05390 from Pyrococcus abyssi (strain GE5 / Orsay).